The following is a 300-amino-acid chain: tRNA dimethylallyltransferase (300 aa).

9-16 (GPTASGKS) contributes to the ATP binding site. 11-16 (TASGKS) lines the substrate pocket. Residues 34-37 (DSKQ) form an interaction with substrate tRNA region.

The protein belongs to the IPP transferase family. As to quaternary structure, monomer. Mg(2+) is required as a cofactor.

The enzyme catalyses adenosine(37) in tRNA + dimethylallyl diphosphate = N(6)-dimethylallyladenosine(37) in tRNA + diphosphate. Functionally, catalyzes the transfer of a dimethylallyl group onto the adenine at position 37 in tRNAs that read codons beginning with uridine, leading to the formation of N6-(dimethylallyl)adenosine (i(6)A). In Ehrlichia ruminantium (strain Welgevonden), this protein is tRNA dimethylallyltransferase.